The chain runs to 363 residues: 3-dehydroquinate synthase (363 aa).

NAD(+)-binding positions include Gly-109–Asp-113, Thr-133–Thr-134, Lys-146, and Lys-155. Zn(2+)-binding residues include Glu-188, His-251, and His-267.

The protein belongs to the sugar phosphate cyclases superfamily. Dehydroquinate synthase family. NAD(+) serves as cofactor. It depends on Co(2+) as a cofactor. Zn(2+) is required as a cofactor.

It is found in the cytoplasm. It catalyses the reaction 7-phospho-2-dehydro-3-deoxy-D-arabino-heptonate = 3-dehydroquinate + phosphate. It functions in the pathway metabolic intermediate biosynthesis; chorismate biosynthesis; chorismate from D-erythrose 4-phosphate and phosphoenolpyruvate: step 2/7. Catalyzes the conversion of 3-deoxy-D-arabino-heptulosonate 7-phosphate (DAHP) to dehydroquinate (DHQ). The sequence is that of 3-dehydroquinate synthase from Streptomyces avermitilis (strain ATCC 31267 / DSM 46492 / JCM 5070 / NBRC 14893 / NCIMB 12804 / NRRL 8165 / MA-4680).